A 422-amino-acid chain; its full sequence is UDP-N-acetylglucosamine 1-carboxyvinyltransferase (422 aa).

22-23 (KN) is a phosphoenolpyruvate binding site. R94 provides a ligand contact to UDP-N-acetyl-alpha-D-glucosamine. C118 functions as the Proton donor in the catalytic mechanism. C118 bears the 2-(S-cysteinyl)pyruvic acid O-phosphothioketal mark. Residues 123-127 (RPVDL), D309, and I331 contribute to the UDP-N-acetyl-alpha-D-glucosamine site.

This sequence belongs to the EPSP synthase family. MurA subfamily.

Its subcellular location is the cytoplasm. It carries out the reaction phosphoenolpyruvate + UDP-N-acetyl-alpha-D-glucosamine = UDP-N-acetyl-3-O-(1-carboxyvinyl)-alpha-D-glucosamine + phosphate. It functions in the pathway cell wall biogenesis; peptidoglycan biosynthesis. Functionally, cell wall formation. Adds enolpyruvyl to UDP-N-acetylglucosamine. This is UDP-N-acetylglucosamine 1-carboxyvinyltransferase from Cereibacter sphaeroides (strain ATCC 17023 / DSM 158 / JCM 6121 / CCUG 31486 / LMG 2827 / NBRC 12203 / NCIMB 8253 / ATH 2.4.1.) (Rhodobacter sphaeroides).